The primary structure comprises 238 residues: 3-deoxy-D-manno-octulosonic acid kinase (238 aa).

Aspartate 167 is a catalytic residue.

This sequence belongs to the protein kinase superfamily. KdkA/RfaP family.

Its subcellular location is the cell inner membrane. It catalyses the reaction an alpha-Kdo-(2-&gt;6)-lipid IVA + ATP = a 4-O-phospho-alpha-Kdo-(2-&gt;6)-lipid IVA + ADP + H(+). The protein operates within bacterial outer membrane biogenesis; LPS core biosynthesis. Its function is as follows. Catalyzes the ATP-dependent phosphorylation of the 3-deoxy-D-manno-octulosonic acid (Kdo) residue in Kdo-lipid IV(A) at the 4-OH position. The protein is 3-deoxy-D-manno-octulosonic acid kinase of Vibrio parahaemolyticus serotype O3:K6 (strain RIMD 2210633).